The following is a 354-amino-acid chain: NADH-quinone oxidoreductase subunit H (354 aa).

Transmembrane regions (helical) follow at residues 25-45 (LVRI…LILW), 91-111 (WIYL…WAVI), 126-146 (LLYA…AGWA), 170-190 (MGFA…SGIV), 205-225 (FLSW…ISGI), 267-287 (IVIS…PFGF), 290-310 (FVPG…VFIW), and 330-350 (IFIP…MSPL).

The protein belongs to the complex I subunit 1 family. NDH-1 is composed of 14 different subunits. Subunits NuoA, H, J, K, L, M, N constitute the membrane sector of the complex.

It localises to the cell inner membrane. It carries out the reaction a quinone + NADH + 5 H(+)(in) = a quinol + NAD(+) + 4 H(+)(out). Functionally, NDH-1 shuttles electrons from NADH, via FMN and iron-sulfur (Fe-S) centers, to quinones in the respiratory chain. The immediate electron acceptor for the enzyme in this species is believed to be ubiquinone. Couples the redox reaction to proton translocation (for every two electrons transferred, four hydrogen ions are translocated across the cytoplasmic membrane), and thus conserves the redox energy in a proton gradient. This subunit may bind ubiquinone. The sequence is that of NADH-quinone oxidoreductase subunit H from Paraburkholderia phytofirmans (strain DSM 17436 / LMG 22146 / PsJN) (Burkholderia phytofirmans).